The following is a 295-amino-acid chain: Ethanolamine ammonia-lyase small subunit (295 aa).

The adenosylcob(III)alamin site is built by Val-207, Glu-228, and Cys-258.

Belongs to the EutC family. The basic unit is a heterodimer which dimerizes to form tetramers. The heterotetramers trimerize; 6 large subunits form a core ring with 6 small subunits projecting outwards. It depends on adenosylcob(III)alamin as a cofactor.

The protein localises to the bacterial microcompartment. The enzyme catalyses ethanolamine = acetaldehyde + NH4(+). It participates in amine and polyamine degradation; ethanolamine degradation. Its function is as follows. Catalyzes the deamination of various vicinal amino-alcohols to oxo compounds. Allows this organism to utilize ethanolamine as the sole source of nitrogen and carbon in the presence of external vitamin B12. The chain is Ethanolamine ammonia-lyase small subunit from Escherichia coli (strain SMS-3-5 / SECEC).